Consider the following 309-residue polypeptide: Mas-related G-protein coupled receptor member E (309 aa).

Residues 1-21 (MSLRVHTHSPSTQGDMAFNLT) lie on the Extracellular side of the membrane. A glycan (N-linked (GlcNAc...) asparagine) is linked at Asn19. The helical transmembrane segment at 22 to 42 (ILSLTELLSLGGLLGNGVALW) threads the bilayer. The Cytoplasmic portion of the chain corresponds to 43-59 (LLNQNVYRNPFSIYLLD). The chain crosses the membrane as a helical span at residues 60-80 (VACADLIFLCCHMVAIIPELL). The Extracellular segment spans residues 81-91 (QDQLNFPEFVH). The chain crosses the membrane as a helical span at residues 92-112 (ISLIMLRFFCYIVGLSLLVAI). At 113-132 (STEQCLATLFPSGYLCRRPR) the chain is on the cytoplasmic side. The chain crosses the membrane as a helical span at residues 133–153 (YLTTCVCAFIWVLCLLLDLLL). Residues 154-168 (SGACTQFFGAPSYHL) lie on the Extracellular side of the membrane. A helical transmembrane segment spans residues 169-189 (CGMLWLVVAVLLAALCCTMCV). At 190–212 (TSLLLLLRVERGPERHQPRGFPT) the chain is on the cytoplasmic side. Residues 213 to 233 (LVLLVILLFLFCGLPFGIFWL) form a helical membrane-spanning segment. The Extracellular portion of the chain corresponds to 234 to 247 (SKNLSWHTPLYFYH). Asn236 is a glycosylation site (N-linked (GlcNAc...) asparagine). A helical transmembrane segment spans residues 248–268 (FSFFMASVHSAAKPAIYFFLG). Residues 269–309 (STPGQRFQEPLRLVLQRALGDEAELGAVREASQGGLVDMTV) lie on the Cytoplasmic side of the membrane.

It belongs to the G-protein coupled receptor 1 family. Mas subfamily.

The protein resides in the cell membrane. In terms of biological role, orphan receptor. May regulate nociceptor function and/or development, including the sensation or modulation of pain. The sequence is that of Mas-related G-protein coupled receptor member E (Mrgpre) from Rattus norvegicus (Rat).